Here is a 735-residue protein sequence, read N- to C-terminus: Coiled-coil quantitatively-enriched protein 1 (735 aa).

Positions 514–719 (AAVQYLQRRL…TLKILEQKSL (206 aa)) form a coiled coil.

In terms of assembly, interacts (during meiosis) with pcp1. Interacts with clr3, pot1, taz1 and tpz1.

The protein resides in the nucleus. The protein localises to the nucleoplasm. It is found in the chromosome. It localises to the telomere. Its function is as follows. Component of the meiotic bouquet that facilitates meiotic nuclear reorganization of the telomeres to the centrosome. Links telomeres to the meiotic centrosome component pcp1. Essential for the formation of normal telomere clusters during meiotic prophase. Required for telomere length regulation and chromosome segregation. Required for proper positioning of nucleosomes at heterochromatic loci and for transcriptional gene silencing (TGS) function of the Snf2/Hdac-containing repressor complex (SHREC). The sequence is that of Coiled-coil quantitatively-enriched protein 1 (ccq1) from Schizosaccharomyces pombe (strain 972 / ATCC 24843) (Fission yeast).